Here is a 78-residue protein sequence, read N- to C-terminus: Large ribosomal subunit protein bL28 (78 aa).

The tract at residues 1 to 33 (MARKDDVTGEGPVTGNSVSDSNQKTNRRFKRNL) is disordered. Residues 14–24 (TGNSVSDSNQK) show a composition bias toward polar residues.

This sequence belongs to the bacterial ribosomal protein bL28 family.

This Salinibacter ruber (strain DSM 13855 / M31) protein is Large ribosomal subunit protein bL28.